An 833-amino-acid chain; its full sequence is Protein translocase subunit SecA (833 aa).

Residues Gln-87, 105 to 109 (GEGKT), and Asp-494 contribute to the ATP site. Positions 789–816 (PAAVAYSGGEAEAGPAQPHREDPKVGRN) are disordered. Residues 806–815 (PHREDPKVGR) show a composition bias toward basic and acidic residues. Residues Cys-819, Cys-821, Cys-830, and Cys-831 each contribute to the Zn(2+) site.

It belongs to the SecA family. In terms of assembly, monomer and homodimer. Part of the essential Sec protein translocation apparatus which comprises SecA, SecYEG and auxiliary proteins SecDF-YajC and YidC. It depends on Zn(2+) as a cofactor.

It localises to the cell inner membrane. The protein localises to the cytoplasm. It carries out the reaction ATP + H2O + cellular proteinSide 1 = ADP + phosphate + cellular proteinSide 2.. Its function is as follows. Part of the Sec protein translocase complex. Interacts with the SecYEG preprotein conducting channel. Has a central role in coupling the hydrolysis of ATP to the transfer of proteins into and across the cell membrane, serving as an ATP-driven molecular motor driving the stepwise translocation of polypeptide chains across the membrane. This Nitratidesulfovibrio vulgaris (strain ATCC 29579 / DSM 644 / CCUG 34227 / NCIMB 8303 / VKM B-1760 / Hildenborough) (Desulfovibrio vulgaris) protein is Protein translocase subunit SecA.